We begin with the raw amino-acid sequence, 344 residues long: GTP 3',8-cyclase (344 aa).

Residues 19–245 form the Radical SAM core domain; the sequence is PFGRAVTYLR…DIPYRTGGPA (227 aa). Position 28 (arginine 28) interacts with GTP. Cysteine 35 and cysteine 39 together coordinate [4Fe-4S] cluster. Tyrosine 41 provides a ligand contact to S-adenosyl-L-methionine. Cysteine 42 is a binding site for [4Fe-4S] cluster. Arginine 77 contacts GTP. An S-adenosyl-L-methionine-binding site is contributed by glycine 81. Threonine 111 lines the GTP pocket. Serine 135 provides a ligand contact to S-adenosyl-L-methionine. Lysine 171 contacts GTP. Methionine 205 serves as a coordination point for S-adenosyl-L-methionine. Residues cysteine 268 and cysteine 271 each coordinate [4Fe-4S] cluster. Residue 273–275 coordinates GTP; it reads RVR. Cysteine 285 lines the [4Fe-4S] cluster pocket.

The protein belongs to the radical SAM superfamily. MoaA family. Monomer and homodimer. [4Fe-4S] cluster serves as cofactor.

It carries out the reaction GTP + AH2 + S-adenosyl-L-methionine = (8S)-3',8-cyclo-7,8-dihydroguanosine 5'-triphosphate + 5'-deoxyadenosine + L-methionine + A + H(+). It functions in the pathway cofactor biosynthesis; molybdopterin biosynthesis. Catalyzes the cyclization of GTP to (8S)-3',8-cyclo-7,8-dihydroguanosine 5'-triphosphate. The protein is GTP 3',8-cyclase of Brucella canis (strain ATCC 23365 / NCTC 10854 / RM-666).